The chain runs to 392 residues: HCLS1-binding protein 3 (392 aa).

M1 carries the post-translational modification N-acetylmethionine. A phosphoserine mark is found at S3, S139, and S194. The 124-residue stretch at 19–142 (GLDLTVPQHQ…EFLGTRSPGA (124 aa)) folds into the PX domain. 3 disordered regions span residues 138–162 (RSPG…QTGN), 174–265 (DQVA…PLKL), and 319–364 (GAEP…KPQE). Over residues 190 to 201 (DAEESLEEEEAL) the composition is skewed to acidic residues. The span at 208–220 (RSKKPKKHPKVAV) shows a compositional bias: basic residues. S249 bears the Phosphoserine mark. A compositionally biased stretch (pro residues) spans 325 to 335 (KPQLKPKPPVA). An N6-acetyllysine modification is found at K337.

In terms of assembly, binds HCLS1. Interacts with the SH3 domain of HCLS1 in vitro.

Functionally, may be a modulator of IL-2 signaling. The protein is HCLS1-binding protein 3 (HS1BP3) of Homo sapiens (Human).